A 669-amino-acid chain; its full sequence is DNA ligase (669 aa).

NAD(+) contacts are provided by residues 34–38 (DAEYD), 83–84 (SL), and Glu-114. Lys-116 acts as the N6-AMP-lysine intermediate in catalysis. Residues Arg-137, Glu-171, Lys-287, and Lys-311 each coordinate NAD(+). Zn(2+) is bound by residues Cys-405, Cys-408, Cys-423, and Cys-428. The BRCT domain occupies 591 to 669 (NVESYFAGKT…EERFLQELNK (79 aa)).

Belongs to the NAD-dependent DNA ligase family. LigA subfamily. Requires Mg(2+) as cofactor. The cofactor is Mn(2+).

The enzyme catalyses NAD(+) + (deoxyribonucleotide)n-3'-hydroxyl + 5'-phospho-(deoxyribonucleotide)m = (deoxyribonucleotide)n+m + AMP + beta-nicotinamide D-nucleotide.. Functionally, DNA ligase that catalyzes the formation of phosphodiester linkages between 5'-phosphoryl and 3'-hydroxyl groups in double-stranded DNA using NAD as a coenzyme and as the energy source for the reaction. It is essential for DNA replication and repair of damaged DNA. The sequence is that of DNA ligase from Bacillus cereus (strain ATCC 14579 / DSM 31 / CCUG 7414 / JCM 2152 / NBRC 15305 / NCIMB 9373 / NCTC 2599 / NRRL B-3711).